The sequence spans 202 residues: Small ribosomal subunit protein uS5 (202 aa).

Residues 1–13 are compositionally biased toward gly residues; sequence MPGQQRRGGGSGG. The interval 1 to 31 is disordered; that stretch reads MPGQQRRGGGSGGSDRRERRDRSGSGPAQEK. A compositionally biased stretch (basic and acidic residues) spans 14 to 23; that stretch reads SDRRERRDRS. The region spanning 34 to 97 is the S5 DRBM domain; sequence YVERVVAINR…EEAKKHFFKV (64 aa).

This sequence belongs to the universal ribosomal protein uS5 family. As to quaternary structure, part of the 30S ribosomal subunit. Contacts proteins S4 and S8.

Its function is as follows. With S4 and S12 plays an important role in translational accuracy. In terms of biological role, located at the back of the 30S subunit body where it stabilizes the conformation of the head with respect to the body. The polypeptide is Small ribosomal subunit protein uS5 (Frankia casuarinae (strain DSM 45818 / CECT 9043 / HFP020203 / CcI3)).